Here is a 696-residue protein sequence, read N- to C-terminus: Elongation factor G (696 aa).

The region spanning E8–L290 is the tr-type G domain. GTP-binding positions include A17–T24, D88–H92, and N142–D145.

It belongs to the TRAFAC class translation factor GTPase superfamily. Classic translation factor GTPase family. EF-G/EF-2 subfamily.

It localises to the cytoplasm. In terms of biological role, catalyzes the GTP-dependent ribosomal translocation step during translation elongation. During this step, the ribosome changes from the pre-translocational (PRE) to the post-translocational (POST) state as the newly formed A-site-bound peptidyl-tRNA and P-site-bound deacylated tRNA move to the P and E sites, respectively. Catalyzes the coordinated movement of the two tRNA molecules, the mRNA and conformational changes in the ribosome. In Nitrosomonas eutropha (strain DSM 101675 / C91 / Nm57), this protein is Elongation factor G.